A 117-amino-acid chain; its full sequence is MKGKKYYSDYHVWIEPIHSQIVRLGLSSRMQEHLGNILHIDLPSLGASIKEGEELCVLESSKSAIEVLSPVSGEVIEVNIALEDDTHPINHSAESEGWFVVLQLSEDFDGERFSLDP.

Residues isoleucine 21–glutamine 103 form the Lipoyl-binding domain. N6-lipoyllysine is present on lysine 62.

Belongs to the GcvH family. Requires (R)-lipoate as cofactor.

The polypeptide is Glycine cleavage system H-like protein (Chlamydia muridarum (strain MoPn / Nigg)).